A 388-amino-acid polypeptide reads, in one-letter code: Succinate--CoA ligase [ADP-forming] subunit beta (388 aa).

One can recognise an ATP-grasp domain in the interval 9 to 245; sequence KALLKEYGMP…KSQENERELK (237 aa). Residues K46, 53-55, E100, Y103, and E108 each bind ATP; that span reads GRG. The Mg(2+) site is built by N200 and D214. Substrate contacts are provided by residues N265 and 322-324; that span reads GIV.

This sequence belongs to the succinate/malate CoA ligase beta subunit family. As to quaternary structure, heterotetramer of two alpha and two beta subunits. It depends on Mg(2+) as a cofactor.

It catalyses the reaction succinate + ATP + CoA = succinyl-CoA + ADP + phosphate. The enzyme catalyses GTP + succinate + CoA = succinyl-CoA + GDP + phosphate. It participates in carbohydrate metabolism; tricarboxylic acid cycle; succinate from succinyl-CoA (ligase route): step 1/1. Succinyl-CoA synthetase functions in the citric acid cycle (TCA), coupling the hydrolysis of succinyl-CoA to the synthesis of either ATP or GTP and thus represents the only step of substrate-level phosphorylation in the TCA. The beta subunit provides nucleotide specificity of the enzyme and binds the substrate succinate, while the binding sites for coenzyme A and phosphate are found in the alpha subunit. The chain is Succinate--CoA ligase [ADP-forming] subunit beta from Acinetobacter baumannii (strain SDF).